The chain runs to 130 residues: Aspartate 1-decarboxylase (130 aa).

The active-site Schiff-base intermediate with substrate; via pyruvic acid is S25. Residue S25 is modified to Pyruvic acid (Ser). Residue T57 coordinates substrate. The active-site Proton donor is the Y58. A substrate-binding site is contributed by 73 to 75; it reads GAA.

This sequence belongs to the PanD family. Heterooctamer of four alpha and four beta subunits. Pyruvate is required as a cofactor. In terms of processing, is synthesized initially as an inactive proenzyme, which is activated by self-cleavage at a specific serine bond to produce a beta-subunit with a hydroxyl group at its C-terminus and an alpha-subunit with a pyruvoyl group at its N-terminus.

It localises to the cytoplasm. The enzyme catalyses L-aspartate + H(+) = beta-alanine + CO2. It functions in the pathway cofactor biosynthesis; (R)-pantothenate biosynthesis; beta-alanine from L-aspartate: step 1/1. In terms of biological role, catalyzes the pyruvoyl-dependent decarboxylation of aspartate to produce beta-alanine. In Myxococcus xanthus (strain DK1622), this protein is Aspartate 1-decarboxylase.